The primary structure comprises 245 residues: tRNA1(Val) (adenine(37)-N6)-methyltransferase (245 aa).

This sequence belongs to the methyltransferase superfamily. tRNA (adenine-N(6)-)-methyltransferase family.

The protein resides in the cytoplasm. It carries out the reaction adenosine(37) in tRNA1(Val) + S-adenosyl-L-methionine = N(6)-methyladenosine(37) in tRNA1(Val) + S-adenosyl-L-homocysteine + H(+). Functionally, specifically methylates the adenine in position 37 of tRNA(1)(Val) (anticodon cmo5UAC). The polypeptide is tRNA1(Val) (adenine(37)-N6)-methyltransferase (Cronobacter sakazakii (strain ATCC BAA-894) (Enterobacter sakazakii)).